The sequence spans 203 residues: Protein GrpE (203 aa).

Over residues 1–20 (MSSKEQNVHEEQVSKEKEGM) the composition is skewed to basic and acidic residues. A disordered region spans residues 1–38 (MSSKEQNVHEEQVSKEKEGMESVMNESQEQVKSEDAQA).

The protein belongs to the GrpE family. As to quaternary structure, homodimer.

It localises to the cytoplasm. Functionally, participates actively in the response to hyperosmotic and heat shock by preventing the aggregation of stress-denatured proteins, in association with DnaK and GrpE. It is the nucleotide exchange factor for DnaK and may function as a thermosensor. Unfolded proteins bind initially to DnaJ; upon interaction with the DnaJ-bound protein, DnaK hydrolyzes its bound ATP, resulting in the formation of a stable complex. GrpE releases ADP from DnaK; ATP binding to DnaK triggers the release of the substrate protein, thus completing the reaction cycle. Several rounds of ATP-dependent interactions between DnaJ, DnaK and GrpE are required for fully efficient folding. The chain is Protein GrpE from Proteus mirabilis (strain HI4320).